The following is a 96-amino-acid chain: Bublin coiled-coil protein (96 aa).

Positions 39-79 (NSCLDDIEDRNDALNGKLHELLESNRQARKDFRQQLNDEEA) form a coiled coil. A disordered region spans residues 63-96 (NRQARKDFRQQLNDEEASPPPAEDPASRDTQTED). Residues 87 to 96 (PASRDTQTED) are compositionally biased toward basic and acidic residues.

Belongs to the UPF0184 (EST00098) family.

It is found in the cell junction. Its subcellular location is the cytoplasm. The protein localises to the cytoskeleton. Its function is as follows. Essential for intermediate filament organization in intestinal cells, interacts with intermediate filament and regulates intestinal lumen morphology. The polypeptide is Bublin coiled-coil protein (bbln) (Ctenopharyngodon idella (Grass carp)).